A 200-amino-acid chain; its full sequence is Gamma-glutamyl-CDP-amidate hydrolase (200 aa).

The Glutamine amidotransferase type-1 domain maps to 20–200 (ECLALDWGKL…LKEWFSLIKE (181 aa)). Cys101 serves as the catalytic Nucleophile. Residues His178 and Glu180 contribute to the active site.

It catalyses the reaction N(5)-(cytidine 5'-diphosphoramidyl)-L-glutamine + H2O = cytidine 5'-diphosphoramidate + L-glutamate + H(+). The protein operates within capsule biogenesis; capsule polysaccharide biosynthesis. Its function is as follows. Involved in the biosynthesis of the O-methyl phosphoramidate (MeOPN) group found on the capsular polysaccharide (CPS) of C.jejuni. Catalyzes the hydrolysis of CDP-L-glutamine to L-glutamate and cytidine diphosphoramidate. This Campylobacter jejuni subsp. jejuni serotype O:2 (strain ATCC 700819 / NCTC 11168) protein is Gamma-glutamyl-CDP-amidate hydrolase.